The chain runs to 375 residues: Probable aminomethyltransferase (375 aa).

Belongs to the GcvT family. The glycine cleavage system is composed of four proteins: P, T, L and H.

It carries out the reaction N(6)-[(R)-S(8)-aminomethyldihydrolipoyl]-L-lysyl-[protein] + (6S)-5,6,7,8-tetrahydrofolate = N(6)-[(R)-dihydrolipoyl]-L-lysyl-[protein] + (6R)-5,10-methylene-5,6,7,8-tetrahydrofolate + NH4(+). Its function is as follows. The glycine cleavage system catalyzes the degradation of glycine. This chain is Probable aminomethyltransferase, found in Aeropyrum pernix (strain ATCC 700893 / DSM 11879 / JCM 9820 / NBRC 100138 / K1).